We begin with the raw amino-acid sequence, 466 residues long: MKYNNGKVSDVKIAYIGGGSRGWAWTFMTDLAMEPNMSGKISLYDIDQEAAKNNEIIGNMITRRDDTVGKWNYETANTMEAALTGADFVVISILPGTFDEMEADVHMPERLGIYQSVGDTAGPGGMMRALRTIPMFVTIANAIKEYSPKAWVINYTNPMSMCVKTLYHVFPEIKAFGCCHEVFGTQKVLKGIAEQELKIDRIDRNDIHVNVLGINHFTWFNYASYQGIDLFPIYCKYIEDHFEEGFEEKDENWANASFACKHRVKFDLFNEFGLIAAAGDRHLTEFMPSERYLKDKETVADWNFGLTTVEWRKKDLEDRLNKSHRLVSGEEEIKLEPSGEEGILLIKALCGLTRVISNVNIPNTNLQIENLPSTAIVETNAVFERDSIRPIMAGEMPENVVKLTMPHILNHEYIMEAALTFDKSLVVKAFEQDPLVKDMATKEEVEKLVEDMLDATKAYLPKEWNL.

11-78 (VKIAYIGGGS…GKWNYETANT (68 aa)) lines the NAD(+) pocket. Substrate is bound at residue asparagine 157. Residue cysteine 179 coordinates Mn(2+). Residue histidine 180 is the Proton donor of the active site. Residue histidine 216 participates in Mn(2+) binding.

This sequence belongs to the glycosyl hydrolase 4 family. Homotetramer. NAD(+) serves as cofactor. Mn(2+) is required as a cofactor.

It carries out the reaction [(1-&gt;4)-alpha-D-galacturonosyl](n) + H2O = alpha-D-galacturonate + [(1-&gt;4)-alpha-D-galacturonosyl](n-1). Its function is as follows. Alpha-galacturonidase able to catalyze the hydrolysis of the chromogenic substrate p-nitrophenyl-alpha-D-galacturonic acid (pNPalphaGalUA). It is probable that alpha-1,4-di-galacturonate (GalUA(2)) is the naturally occurring substrate. The polypeptide is Alpha-galacturonidase (Lachnoclostridium phytofermentans (strain ATCC 700394 / DSM 18823 / ISDg) (Clostridium phytofermentans)).